A 1102-amino-acid chain; its full sequence is Carbamoyl phosphate synthase large chain (1102 aa).

Positions 1–408 are carboxyphosphate synthetic domain; it reads MPKRSDIQSV…ALQKALRSLE (408 aa). Arg-129, Arg-175, Gly-181, Gly-182, Glu-214, Ile-216, Glu-221, Gly-247, Val-248, His-249, Gln-291, and Glu-305 together coordinate ATP. The 198-residue stretch at 137–334 folds into the ATP-grasp 1 domain; it reads EAVKEKIGYG…IAKIAAKLAV (198 aa). Positions 291, 305, and 307 each coordinate Mg(2+). The Mn(2+) site is built by Gln-291, Glu-305, and Asn-307. The oligomerization domain stretch occupies residues 409-551; sequence KKGSQFAFTG…YFYSSYDEES (143 aa). Residues 552–954 form a carbamoyl phosphate synthetic domain region; that stretch reads EVAPRTKPAV…AYAKSQAGAY (403 aa). Residues 682-873 form the ATP-grasp 2 domain; that stretch reads GRVLAEAGLP…LAKAAARISL (192 aa). Residues Arg-718, Arg-757, Leu-759, Glu-764, Gly-789, Ile-790, His-791, Ser-792, Gln-832, and Glu-844 each coordinate ATP. The Mg(2+) site is built by Gln-832, Glu-844, and Asn-846. Gln-832, Glu-844, and Asn-846 together coordinate Mn(2+). Residues 955–1100 form the MGS-like domain; it reads GPLPTAGRAF…QEHAEHLTAA (146 aa). The interval 955–1102 is allosteric domain; that stretch reads GPLPTAGRAF…HAEHLTAARD (148 aa).

It belongs to the CarB family. Composed of two chains; the small (or glutamine) chain promotes the hydrolysis of glutamine to ammonia, which is used by the large (or ammonia) chain to synthesize carbamoyl phosphate. Tetramer of heterodimers (alpha,beta)4. The cofactor is Mg(2+). Mn(2+) is required as a cofactor.

The catalysed reaction is hydrogencarbonate + L-glutamine + 2 ATP + H2O = carbamoyl phosphate + L-glutamate + 2 ADP + phosphate + 2 H(+). The enzyme catalyses hydrogencarbonate + NH4(+) + 2 ATP = carbamoyl phosphate + 2 ADP + phosphate + 2 H(+). It participates in amino-acid biosynthesis; L-arginine biosynthesis; carbamoyl phosphate from bicarbonate: step 1/1. It functions in the pathway pyrimidine metabolism; UMP biosynthesis via de novo pathway; (S)-dihydroorotate from bicarbonate: step 1/3. In terms of biological role, large subunit of the glutamine-dependent carbamoyl phosphate synthetase (CPSase). CPSase catalyzes the formation of carbamoyl phosphate from the ammonia moiety of glutamine, carbonate, and phosphate donated by ATP, constituting the first step of 2 biosynthetic pathways, one leading to arginine and/or urea and the other to pyrimidine nucleotides. The large subunit (synthetase) binds the substrates ammonia (free or transferred from glutamine from the small subunit), hydrogencarbonate and ATP and carries out an ATP-coupled ligase reaction, activating hydrogencarbonate by forming carboxy phosphate which reacts with ammonia to form carbamoyl phosphate. This is Carbamoyl phosphate synthase large chain from Streptomyces griseus subsp. griseus (strain JCM 4626 / CBS 651.72 / NBRC 13350 / KCC S-0626 / ISP 5235).